We begin with the raw amino-acid sequence, 192 residues long: Probable GTP-binding protein EngB (192 aa).

Residues 22–192 (QLPEIVFVGR…LLEQLAIYTG (171 aa)) form the EngB-type G domain. Residues 30 to 37 (GRSNVGKS), 57 to 61 (GKTQL), 75 to 78 (DLPG), 142 to 145 (TKYD), and 172 to 174 (YSA) contribute to the GTP site. Positions 37 and 59 each coordinate Mg(2+).

This sequence belongs to the TRAFAC class TrmE-Era-EngA-EngB-Septin-like GTPase superfamily. EngB GTPase family. Mg(2+) serves as cofactor.

In terms of biological role, necessary for normal cell division and for the maintenance of normal septation. The protein is Probable GTP-binding protein EngB of Chlorobium phaeobacteroides (strain BS1).